Here is a 300-residue protein sequence, read N- to C-terminus: UDP-N-acetylenolpyruvoylglucosamine reductase (300 aa).

Positions 30–194 (KVGGPADFFA…LAAVFSLAAG (165 aa)) constitute an FAD-binding PCMH-type domain. The active site involves R174. S223 (proton donor) is an active-site residue. The active site involves E293.

The protein belongs to the MurB family. The cofactor is FAD.

Its subcellular location is the cytoplasm. The catalysed reaction is UDP-N-acetyl-alpha-D-muramate + NADP(+) = UDP-N-acetyl-3-O-(1-carboxyvinyl)-alpha-D-glucosamine + NADPH + H(+). It participates in cell wall biogenesis; peptidoglycan biosynthesis. In terms of biological role, cell wall formation. This is UDP-N-acetylenolpyruvoylglucosamine reductase from Geotalea uraniireducens (strain Rf4) (Geobacter uraniireducens).